The chain runs to 118 residues: Fluoride-specific ion channel FluC 2 (118 aa).

The next 4 membrane-spanning stretches (helical) occupy residues 1-21 (MIEA…RFAI), 33-53 (FPIA…YIIG), 55-75 (GVTT…FTTF), and 93-113 (TFLL…FLGM). Gly-70 and Thr-73 together coordinate Na(+).

It belongs to the fluoride channel Fluc/FEX (TC 1.A.43) family.

It is found in the cell membrane. The catalysed reaction is fluoride(in) = fluoride(out). Its activity is regulated as follows. Na(+) is not transported, but it plays an essential structural role and its presence is essential for fluoride channel function. Its function is as follows. Fluoride-specific ion channel. Important for reducing fluoride concentration in the cell, thus reducing its toxicity. The polypeptide is Fluoride-specific ion channel FluC 2 (Bacillus cereus (strain ZK / E33L)).